Reading from the N-terminus, the 1274-residue chain is Clustered mitochondria protein homolog (1274 aa).

The tract at residues 1-53 is disordered; that stretch reads MAQTNGELEHSKGMSSPAVRISQAQKSTKLTVDPESPEQVANGTHAEGEQPEE. TPR repeat units follow at residues 293–326, 510–543, and 628–661; these read SPSF…PNNP, DYGG…KKHP, and AKEA…ERVD. Residues 342 to 586 form the Clu domain; the sequence is DITRSQENYL…RVTPLDVMWQ (245 aa). Disordered regions lie at residues 631-655 and 893-925; these read AAKK…EEAL and VSNG…ARAA. TPR repeat units lie at residues 998–1031, 1040–1073, 1082–1115, and 1124–1157; these read AKLY…TERT, ILSY…WKII, ITTM…CESL, and ATIL…FLQQ. Residues 1197-1274 form a disordered region; sequence INMTPRTLGT…KLRGSKKSSA (78 aa). Positions 1200-1217 are enriched in polar residues; sequence TPRTLGTRVQPQVGQTAP.

This sequence belongs to the CLU family. In terms of assembly, may associate with the eukaryotic translation initiation factor 3 (eIF-3) complex.

It localises to the cytoplasm. Its function is as follows. mRNA-binding protein involved in proper cytoplasmic distribution of mitochondria. This chain is Clustered mitochondria protein homolog, found in Aspergillus terreus (strain NIH 2624 / FGSC A1156).